We begin with the raw amino-acid sequence, 291 residues long: ATP synthase gamma chain (291 aa).

This sequence belongs to the ATPase gamma chain family. As to quaternary structure, F-type ATPases have 2 components, CF(1) - the catalytic core - and CF(0) - the membrane proton channel. CF(1) has five subunits: alpha(3), beta(3), gamma(1), delta(1), epsilon(1). CF(0) has three main subunits: a, b and c.

The protein localises to the cell inner membrane. Its function is as follows. Produces ATP from ADP in the presence of a proton gradient across the membrane. The gamma chain is believed to be important in regulating ATPase activity and the flow of protons through the CF(0) complex. The sequence is that of ATP synthase gamma chain from Burkholderia mallei (strain NCTC 10247).